The primary structure comprises 309 residues: Porphobilinogen deaminase (309 aa).

Cys-240 is subject to S-(dipyrrolylmethanemethyl)cysteine.

Belongs to the HMBS family. Monomer. Requires dipyrromethane as cofactor.

It catalyses the reaction 4 porphobilinogen + H2O = hydroxymethylbilane + 4 NH4(+). Its pathway is porphyrin-containing compound metabolism; protoporphyrin-IX biosynthesis; coproporphyrinogen-III from 5-aminolevulinate: step 2/4. In terms of biological role, tetrapolymerization of the monopyrrole PBG into the hydroxymethylbilane pre-uroporphyrinogen in several discrete steps. The protein is Porphobilinogen deaminase of Brevibacillus brevis (strain 47 / JCM 6285 / NBRC 100599).